The sequence spans 643 residues: Protein THEMIS2 (643 aa).

CABIT regions lie at residues 1-238 and 239-514; these read MEPV…TASS and RHVH…KAKG. Residues 546–631 are disordered; it reads EIQAPPPRPP…RQDLDDDEHD (86 aa). At Thr593 the chain carries Phosphothreonine. A compositionally biased stretch (basic residues) spans 609-619; the sequence is PAHRKGHRPAK. A Phosphotyrosine modification is found at Tyr632.

The protein belongs to the themis family. Interacts with VAV1. Interacts with LAT. Interacts constitutively with GRB2, LYN and PLCG2; these interactions increase the activation of PLCG2 and its downstream pathways following B cell receptor stimulation. Phosphorylation at Tyr-632 is induced by LPS. Phosphorylated by Src kinases (Lck or Fyn) following BCR engagement. In terms of tissue distribution, expressed in different endometrial adenocarcinoma cell lines and various other cell lines apart from the prostate cell line LNCaP and the ovarian cancer cell line BG1.

It is found in the nucleus. It localises to the cytoplasm. May constitute a control point in macrophage inflammatory response, promoting LPS-induced TLR4-mediated TNF production. Determines the threshold for activation of B cells by low-affinity and low-avidity ligands via PLCG2 activation and its downstream pathways. This chain is Protein THEMIS2, found in Homo sapiens (Human).